A 114-amino-acid polypeptide reads, in one-letter code: MICOS complex subunit MIC12 (114 aa).

A helical membrane pass occupies residues 4 to 26 (IAKLGSFTLVSGVVATSCYYYFI).

It belongs to the MICOS complex subunit Mic12 family. In terms of assembly, component of the mitochondrial contact site and cristae organizing system (MICOS) complex.

Its subcellular location is the mitochondrion inner membrane. Its function is as follows. Component of the MICOS complex, a large protein complex of the mitochondrial inner membrane that plays crucial roles in the maintenance of crista junctions, inner membrane architecture, and formation of contact sites to the outer membrane. The polypeptide is MICOS complex subunit MIC12 (AIM5) (Candida glabrata (strain ATCC 2001 / BCRC 20586 / JCM 3761 / NBRC 0622 / NRRL Y-65 / CBS 138) (Yeast)).